The chain runs to 610 residues: Aspercryptin biosynthesis cluster-specific transcription regulator atnN (610 aa).

Positions 1 to 26 (MAPKDSQVSASNEMTGNPPSSVQGRS) are enriched in polar residues. The tract at residues 1–27 (MAPKDSQVSASNEMTGNPPSSVQGRSR) is disordered. Positions 30 to 57 (CITCRIRRVKCDEERPHCRRCQSTGRKC) form a DNA-binding region, zn(2)-C6 fungal-type. Disordered regions lie at residues 61-81 (TPLT…KAGS) and 427-493 (AGST…LPRP). 2 stretches are compositionally biased toward low complexity: residues 66-79 (QQPK…AAKA) and 437-474 (SRAG…TPTP).

It is found in the nucleus. In terms of biological role, transcription factor that positively regulates the cluster that mediate the production of aspercryptins, linear lipopeptides built from six amino acids including 2 highly unusual and nonproteogenic amino acids, 2-amino-octanoic acid (2aoa) and 2-amino-dodecanol (2adol). The chain is Aspercryptin biosynthesis cluster-specific transcription regulator atnN from Emericella nidulans (strain FGSC A4 / ATCC 38163 / CBS 112.46 / NRRL 194 / M139) (Aspergillus nidulans).